A 2287-amino-acid polypeptide reads, in one-letter code: Serine/threonine-protein kinase MEC1 (2287 aa).

The region spanning 1310-1864 is the FAT domain; it reads TLAKKSLETD…LWYISILLNS (555 aa). Positions 1968 to 2271 constitute a PI3K/PI4K catalytic domain; it reads FSSQYMVFNS…QVEALTQESC (304 aa). Positions 1974-1980 are G-loop; that stretch reads VFNSLKK. The interval 2140-2148 is catalytic loop; sequence GLGDRHCEN. The segment at 2160-2184 is activation loop; it reads HVDFDCLFEKGKKLPVPEIVPFRLT. The 33-residue stretch at 2255–2287 folds into the FATC domain; the sequence is LALSVSGQVEALTQESCSVENLSKMYIGWLPFW.

The protein belongs to the PI3/PI4-kinase family. ATM subfamily.

It is found in the nucleus. The enzyme catalyses L-seryl-[protein] + ATP = O-phospho-L-seryl-[protein] + ADP + H(+). The catalysed reaction is L-threonyl-[protein] + ATP = O-phospho-L-threonyl-[protein] + ADP + H(+). Its function is as follows. Serine/threonine protein kinase which activates checkpoint signaling upon genotoxic stresses such as ionizing radiation (IR), ultraviolet light (UV), or DNA replication stalling, thereby acting as a DNA damage sensor. Recognizes the substrate consensus sequence [ST]-Q. Recruited to DNA lesions in order to initiate the DNA repair by homologous recombination. Phosphorylates histone H2A to form H2AS128ph (gamma-H2A) at sites of DNA damage, also involved in the regulation of DNA damage response mechanism. Required for cell growth and meiotic recombination. The sequence is that of Serine/threonine-protein kinase MEC1 (MEC1) from Kluyveromyces lactis (strain ATCC 8585 / CBS 2359 / DSM 70799 / NBRC 1267 / NRRL Y-1140 / WM37) (Yeast).